The sequence spans 341 residues: Phosphate acyltransferase (341 aa).

This sequence belongs to the PlsX family. In terms of assembly, homodimer. Probably interacts with PlsY.

The protein resides in the cytoplasm. The enzyme catalyses a fatty acyl-[ACP] + phosphate = an acyl phosphate + holo-[ACP]. It functions in the pathway lipid metabolism; phospholipid metabolism. Catalyzes the reversible formation of acyl-phosphate (acyl-PO(4)) from acyl-[acyl-carrier-protein] (acyl-ACP). This enzyme utilizes acyl-ACP as fatty acyl donor, but not acyl-CoA. This is Phosphate acyltransferase from Vibrio atlanticus (strain LGP32) (Vibrio splendidus (strain Mel32)).